Consider the following 172-residue polypeptide: Translationally-controlled tumor protein homolog (172 aa).

In terms of domain architecture, TCTP spans Met-1–Cys-172.

It belongs to the TCTP family.

Its subcellular location is the cytoplasm. Its function is as follows. Involved in calcium binding and microtubule stabilization. In Drosophila yakuba (Fruit fly), this protein is Translationally-controlled tumor protein homolog.